A 729-amino-acid chain; its full sequence is Catalase-peroxidase (729 aa).

The tryptophyl-tyrosyl-methioninium (Trp-Tyr) (with M-244) cross-link spans tryptophan 95–tyrosine 218. Histidine 96 (proton acceptor) is an active-site residue. The tryptophyl-tyrosyl-methioninium (Tyr-Met) (with W-95) cross-link spans tyrosine 218–methionine 244. A heme b-binding site is contributed by histidine 259.

Belongs to the peroxidase family. Peroxidase/catalase subfamily. As to quaternary structure, homodimer or homotetramer. Heme b is required as a cofactor. In terms of processing, formation of the three residue Trp-Tyr-Met cross-link is important for the catalase, but not the peroxidase activity of the enzyme.

The catalysed reaction is H2O2 + AH2 = A + 2 H2O. It catalyses the reaction 2 H2O2 = O2 + 2 H2O. Bifunctional enzyme with both catalase and broad-spectrum peroxidase activity. The protein is Catalase-peroxidase of Synechococcus sp. (strain CC9605).